A 256-amino-acid chain; its full sequence is uncharacterized protein (256 aa).

A run of 4 helical transmembrane segments spans residues 5-25, 30-50, 64-84, and 105-125; these read FIEG…NYLL, ILST…LKVF, VVIF…DPAI, and VGIT…LGII. The interval 198-256 is disordered; it reads EKTKSLDSISHSSSSSRKSSTELKIPPVETRIVAEIPVPSSVKRRRHRPNKSMGSIKNS. The span at 203 to 215 shows a compositional bias: low complexity; the sequence is LDSISHSSSSSRK. Ser210 and Ser211 each carry phosphoserine.

It localises to the endoplasmic reticulum membrane. It is found in the nucleus membrane. This is an uncharacterized protein from Schizosaccharomyces pombe (strain 972 / ATCC 24843) (Fission yeast).